Here is a 389-residue protein sequence, read N- to C-terminus: Odorant receptor 85c (389 aa).

At M1 to H33 the chain is on the cytoplasmic side. The helical transmembrane segment at L34–L54 threads the bilayer. At G55 to A66 the chain is on the extracellular side. A helical transmembrane segment spans residues V67 to W87. At W88 to Y130 the chain is on the cytoplasmic side. A helical transmembrane segment spans residues A131–V151. The Extracellular segment spans residues Y152–Q199. N178 carries an N-linked (GlcNAc...) asparagine glycan. Residues I200–L220 traverse the membrane as a helical segment. Residues A221–D259 are Cytoplasmic-facing. The chain crosses the membrane as a helical span at residues I260–G280. Residues F281–D290 lie on the Extracellular side of the membrane. A helical transmembrane segment spans residues I291–H311. The Cytoplasmic segment spans residues Y312–T359. Residues I360–F380 form a helical membrane-spanning segment. Residues A381–K389 are Extracellular-facing.

It belongs to the insect chemoreceptor superfamily. Heteromeric odorant receptor channel (TC 1.A.69) family. Or49a subfamily. Interacts with Orco. Complexes exist early in the endomembrane system in olfactory sensory neurons (OSNs), coupling these complexes to the conserved ciliary trafficking pathway.

The protein resides in the cell membrane. In terms of biological role, odorant receptor which mediates acceptance or avoidance behavior, depending on its substrates. The odorant receptor repertoire encodes a large collection of odor stimuli that vary widely in identity, intensity, and duration. May form a complex with Orco to form odorant-sensing units, providing sensitive and prolonged odorant signaling and calcium permeability. The chain is Odorant receptor 85c (Or85c) from Drosophila melanogaster (Fruit fly).